The following is a 217-amino-acid chain: UPF0502 protein VIBHAR_05349 (217 aa).

The protein belongs to the UPF0502 family.

This chain is UPF0502 protein VIBHAR_05349, found in Vibrio campbellii (strain ATCC BAA-1116).